The chain runs to 250 residues: 26 kDa periplasmic immunogenic protein (250 aa).

A signal peptide spans 1 to 28; the sequence is MNTRASNFLAASFSTIMLVGAFSLPAFA.

It is found in the periplasm. This Brucella melitensis biotype 1 (strain ATCC 23456 / CCUG 17765 / NCTC 10094 / 16M) protein is 26 kDa periplasmic immunogenic protein (bp26).